Here is a 210-residue protein sequence, read N- to C-terminus: Large ribosomal subunit protein uL3 (210 aa).

Residues 125–151 are disordered; the sequence is RHGQSRGPMSHGSRYHRRPGSMGPVAP.

Belongs to the universal ribosomal protein uL3 family. As to quaternary structure, part of the 50S ribosomal subunit. Forms a cluster with proteins L14 and L19.

In terms of biological role, one of the primary rRNA binding proteins, it binds directly near the 3'-end of the 23S rRNA, where it nucleates assembly of the 50S subunit. In Bacillus cereus (strain ATCC 14579 / DSM 31 / CCUG 7414 / JCM 2152 / NBRC 15305 / NCIMB 9373 / NCTC 2599 / NRRL B-3711), this protein is Large ribosomal subunit protein uL3.